A 281-amino-acid polypeptide reads, in one-letter code: MARKRITRRDPEEELSKFLRHEPGQGQETRKLSSQLTSLKKERRRGLLTRLGSIMAVCLLAIAFLTYYVSPLADVSTVRVLGADDLDGKSMVEVAQIKASDKVVDALRGQKKISKKLAAKYPEVASVTLSVKGLNTLNMQVHERKVSGYIKDGSSYREILANGELGTKSLAWREFDHDKPLFISYSKQVALKTNLKIFNSFPEYFKKQVKMLSGNTRRKTQMILVMKDGNVIIGNTETIKSKVKYYNSIKQDLTTNSVIDMEVGAFTRPLTSAEKKAYGLS.

The tract at residues 1 to 36 (MARKRITRRDPEEELSKFLRHEPGQGQETRKLSSQL) is disordered. The Cytoplasmic segment spans residues 1–46 (MARKRITRRDPEEELSKFLRHEPGQGQETRKLSSQLTSLKKERRRG). A compositionally biased stretch (basic and acidic residues) spans 8 to 31 (RRDPEEELSKFLRHEPGQGQETRK). The helical transmembrane segment at 47-69 (LLTRLGSIMAVCLLAIAFLTYYV) threads the bilayer. At 70-281 (SPLADVSTVR…SAEKKAYGLS (212 aa)) the chain is on the extracellular side. The region spanning 73–144 (ADVSTVRVLG…NTLNMQVHER (72 aa)) is the POTRA domain.

The protein belongs to the FtsQ/DivIB family. DivIB subfamily.

It localises to the cell membrane. In terms of biological role, cell division protein that may be involved in stabilizing or promoting the assembly of the division complex. The protein is Cell division protein DivIB of Lactobacillus delbrueckii subsp. bulgaricus (strain ATCC 11842 / DSM 20081 / BCRC 10696 / JCM 1002 / NBRC 13953 / NCIMB 11778 / NCTC 12712 / WDCM 00102 / Lb 14).